Reading from the N-terminus, the 354-residue chain is Glucose 1-dehydrogenase (354 aa).

Positions 1–27 are disordered; that stretch reads MKVIGVTRDDDGPQLLERERPSPDPGE. The segment covering 7–22 has biased composition (basic and acidic residues); that stretch reads TRDDDGPQLLERERPS. D38 provides a ligand contact to Zn(2+). Position 40 (T40) interacts with substrate. The Zn(2+) site is built by H63 and E64. The interval 91–110 is disordered; sequence PNGETNEYFRRGEPDMAPDG. Substrate is bound by residues E114 and E150. Zn(2+) is bound at residue E150. NADP(+) is bound by residues 181 to 184, 204 to 205, 269 to 271, and 298 to 300; these read NGSL, RR, LGI, and TVN. N300 provides a ligand contact to substrate.

It belongs to the zinc-containing alcohol dehydrogenase family. Glucose 1-dehydrogenase subfamily. Zn(2+) serves as cofactor.

It carries out the reaction D-glucose + NAD(+) = D-glucono-1,5-lactone + NADH + H(+). The enzyme catalyses D-glucose + NADP(+) = D-glucono-1,5-lactone + NADPH + H(+). Its function is as follows. Catalyzes the NAD(P)(+)-dependent oxidation of D-glucose to D-gluconate via gluconolactone. Can utilize both NAD(+) and NADP(+) as electron acceptor. Is involved in the degradation of glucose through a modified Entner-Doudoroff pathway. This is Glucose 1-dehydrogenase from Haloarcula marismortui (strain ATCC 43049 / DSM 3752 / JCM 8966 / VKM B-1809) (Halobacterium marismortui).